Consider the following 286-residue polypeptide: Polyamine aminopropyltransferase (286 aa).

Positions 5 to 238 (KIWHEKLHRH…GTMMFSWGTD (234 aa)) constitute a PABS domain. Residues His64 and Asp88 each contribute to the spermidine site. S-methyl-5'-thioadenosine is bound by residues Glu108 and 140–141 (NG). Asp158 functions as the Proton acceptor in the catalytic mechanism. Spermidine is bound at residue 158–161 (DSTD).

This sequence belongs to the spermidine/spermine synthase family. As to quaternary structure, homodimer or homotetramer.

The protein resides in the cytoplasm. It catalyses the reaction S-adenosyl 3-(methylsulfanyl)propylamine + putrescine = S-methyl-5'-thioadenosine + spermidine + H(+). Its pathway is amine and polyamine biosynthesis; spermidine biosynthesis; spermidine from putrescine: step 1/1. Its function is as follows. Catalyzes the irreversible transfer of a propylamine group from the amino donor S-adenosylmethioninamine (decarboxy-AdoMet) to putrescine (1,4-diaminobutane) to yield spermidine. The sequence is that of Polyamine aminopropyltransferase from Buchnera aphidicola subsp. Schizaphis graminum (strain Sg).